Here is a 300-residue protein sequence, read N- to C-terminus: Ubiquinone biosynthesis protein COQ4, mitochondrial (300 aa).

Zn(2+) contacts are provided by H173, D174, H177, and E189.

The protein belongs to the COQ4 family. In terms of assembly, component of a multi-subunit COQ enzyme complex, composed of at least COQ3, COQ4, COQ5, COQ6, COQ7 and COQ9. Zn(2+) serves as cofactor.

Its subcellular location is the mitochondrion inner membrane. The enzyme catalyses a 4-hydroxy-3-methoxy-5-(all-trans-polyprenyl)benzoate + H(+) = a 2-methoxy-6-(all-trans-polyprenyl)phenol + CO2. It functions in the pathway cofactor biosynthesis; ubiquinone biosynthesis. Lyase that catalyzes the C1-decarboxylation of 4-hydroxy-3-methoxy-5-(all-trans-polyprenyl)benzoic acid into 2-methoxy-6-(all-trans-polyprenyl)phenol during ubiquinone biosynthesis. The polypeptide is Ubiquinone biosynthesis protein COQ4, mitochondrial (Cryptococcus neoformans var. neoformans serotype D (strain B-3501A) (Filobasidiella neoformans)).